We begin with the raw amino-acid sequence, 138 residues long: Large ribosomal subunit protein uL16 (138 aa).

The span at M1–Q17 shows a compositional bias: basic residues. The disordered stretch occupies residues M1–G24.

Belongs to the universal ribosomal protein uL16 family. In terms of assembly, part of the 50S ribosomal subunit.

Its function is as follows. Binds 23S rRNA and is also seen to make contacts with the A and possibly P site tRNAs. The polypeptide is Large ribosomal subunit protein uL16 (Mycolicibacterium vanbaalenii (strain DSM 7251 / JCM 13017 / BCRC 16820 / KCTC 9966 / NRRL B-24157 / PYR-1) (Mycobacterium vanbaalenii)).